A 439-amino-acid polypeptide reads, in one-letter code: Xylose isomerase (439 aa).

Catalysis depends on residues H101 and D104. Residues E232, E268, H271, D296, D307, D309, and D339 each coordinate Mg(2+).

It belongs to the xylose isomerase family. In terms of assembly, homotetramer. Mg(2+) serves as cofactor.

The protein resides in the cytoplasm. It carries out the reaction alpha-D-xylose = alpha-D-xylulofuranose. This is Xylose isomerase from Actinobacillus pleuropneumoniae serotype 5b (strain L20).